Consider the following 378-residue polypeptide: H repeat-associated putative transposase YhhI (378 aa).

Belongs to the transposase 11 family.

The chain is H repeat-associated putative transposase YhhI (yhhI) from Escherichia coli (strain K12).